The sequence spans 2492 residues: Transcriptional regulator ATRX (2492 aa).

The segment at 1–146 (MTAEPMSESK…DKDDFKGPEF (146 aa)) is disordered. K10 is covalently cross-linked (Glycyl lysine isopeptide (Lys-Gly) (interchain with G-Cter in SUMO2)). A compositionally biased stretch (basic and acidic residues) spans 17–27 (KLHDFLAHSSE). Phosphoserine is present on residues S25 and S34. Polar residues predominate over residues 40–57 (MNQNTDKISGSGSNSDMM). Over residues 58 to 72 (ENSKEEGTSSSEKSK) the composition is skewed to basic and acidic residues. Y89 carries the phosphotyrosine modification. Phosphoserine is present on residues S92 and S112. Acidic residues predominate over residues 92 to 108 (SDDEKPLDDETVNEDAS). Residues 135 to 146 (NEDKDDFKGPEF) show a composition bias toward basic and acidic residues. Glycyl lysine isopeptide (Lys-Gly) (interchain with G-Cter in SUMO2) cross-links involve residues K138 and K142. One can recognise an ADD domain in the interval 159-296 (KRGEDGLHGI…LEQLLQQNKK (138 aa)). The GATA-type; atypical zinc finger occupies 170-206 (SCTACGQQVNHFQKDSIYRHPSLQVLICKNCFKYYMS). S213 is modified (phosphoserine). The PHD-type; atypical zinc finger occupies 217–272 (DEQCRWCAEGGNLICCDFCHNAFCKKCILRNLGRKELSTIMDENNQWYCYICHPEP). K299 is covalently cross-linked (Glycyl lysine isopeptide (Lys-Gly) (interchain with G-Cter in SUMO2)). The residue at position 316 (S316) is a Phosphoserine. A Glycyl lysine isopeptide (Lys-Gly) (interchain with G-Cter in SUMO2) cross-link involves residue K438. A compositionally biased stretch (basic and acidic residues) spans 445-502 (KGEKPCALEKKDISKSEAKLSRKQVDSEHMDQNVPTEEQRANKSTGGEHKKSDRKEEP). The segment at 445-614 (KGEKPCALEK…CQEVPQDKDG (170 aa)) is disordered. Residues 550–567 (SGTEQEVESSSVKLNISS) are compositionally biased toward polar residues. Residues 581 to 594 (KVTKELYVKLTPVS) carry the PxVxL motif motif. T591 bears the Phosphothreonine mark. Phosphoserine is present on residues S594 and S598. K623 participates in a covalent cross-link: Glycyl lysine isopeptide (Lys-Gly) (interchain with G-Cter in SUMO1); alternate. Residue K623 forms a Glycyl lysine isopeptide (Lys-Gly) (interchain with G-Cter in SUMO2); alternate linkage. Residue S634 is modified to Phosphoserine. The tract at residues 648-1479 (LEESDLRRSP…SKSPGKGRKK (832 aa)) is disordered. T674 bears the Phosphothreonine mark. S675, S677, S729, and S731 each carry phosphoserine. Residues 755-777 (NEIHTNHKTLYDLKTQAGKDDKG) are compositionally biased toward basic and acidic residues. Phosphoserine occurs at positions 784, 819, 849, 850, 875, and 876. The span at 843-864 (NTKDFDSSEDEKHSKKGMDNQG) shows a compositional bias: basic and acidic residues. The span at 878–887 (DAERKQEREN) shows a compositional bias: basic and acidic residues. S889 is subject to Phosphoserine. Basic and acidic residues-rich tracts occupy residues 894 to 909 (TVDKDTTIMELRDRLP) and 920 to 944 (GVDKFSGKEESFTSLEVRKVAETKE). The span at 945-955 (KSKHLKTKTCK) shows a compositional bias: basic residues. S962 carries the post-translational modification Phosphoserine. Residues 964–1004 (TAEKFLKKDQSDETSEDDKKQSKKGTEEKKKPSDFKKKVIK) show a composition bias toward basic and acidic residues. Position 967 is an N6-acetyllysine (K967). At S974 the chain carries Phosphoserine. Residue T977 is modified to Phosphothreonine. K1004 is covalently cross-linked (Glycyl lysine isopeptide (Lys-Gly) (interchain with G-Cter in SUMO2)). A phosphoserine mark is found at S1011, S1012, and S1013. A compositionally biased stretch (basic and acidic residues) spans 1015-1027 (GTEKLPEREEICH). Residues 1045–1055 (KSKKIRDKTSK) are compositionally biased toward basic residues. Residues 1056–1082 (KKDELSDYAEKSTGKGDSCDSSEDKKS) are compositionally biased toward basic and acidic residues. A Phosphoserine modification is found at S1061. The residue at position 1063 (Y1063) is a Phosphotyrosine. Basic residues predominate over residues 1090-1102 (EKKRCKLLGKSSR). Over residues 1103–1139 (KRQDCSSSDTEKYSMKEDGCNSSDKRLKRIELRERRN) the composition is skewed to basic and acidic residues. The span at 1168-1195 (KQQRTSSKKKAVIVKEKKRNSLRTSTKR) shows a compositional bias: basic residues. Residues 1189–1326 (LRTSTKRKQA…KNQVNSESDS (138 aa)) are interaction with DAXX. A compositionally biased stretch (polar residues) spans 1233 to 1246 (LVLSSHTGFCQSSG). A phosphoserine mark is found at S1244, S1245, and S1253. Positions 1267–1281 (PENRIAKKMLLEEIK) are enriched in basic and acidic residues. Acidic residues predominate over residues 1286–1297 (SDEDGSSDDEPE). Residues 1298–1308 (EGKKRTGKQNE) show a composition bias toward basic and acidic residues. Phosphoserine is present on residues S1322, S1324, and S1326. Residues 1334-1345 (PRYRHRLLRHKL) show a composition bias toward basic residues. Phosphoserine occurs at positions 1348 and 1352. Basic and acidic residues-rich tracts occupy residues 1353 to 1368 (GEEKKTKPKEHKEVKG) and 1408 to 1417 (KKAELEENQR). Basic residues predominate over residues 1419-1428 (YKQKKKRRRI). Acidic residues predominate over residues 1443–1468 (EEEEEEKEEEEEEEEEEEEEEEDEND). K1488 is covalently cross-linked (Glycyl lysine isopeptide (Lys-Gly) (interchain with G-Cter in SUMO2)). S1527 carries the post-translational modification Phosphoserine. At T1529 the chain carries Phosphothreonine. Residues 1581–1768 (KTKKSPGSGC…HCMVNFIKEN (188 aa)) enclose the Helicase ATP-binding domain. 1594–1601 (HCMGLGKT) contacts ATP. The DEGH box motif lies at 1719-1722 (DEGH). Phosphoserine occurs at positions 1906 and 1913. Residues 1913–2000 (SDSDETSMSL…SSNPSSPAPD (88 aa)) are disordered. A compositionally biased stretch (basic residues) spans 1929 to 1938 (KKKKKGKKGK). Residue K1982 forms a Glycyl lysine isopeptide (Lys-Gly) (interchain with G-Cter in SUMO1); alternate linkage. A Glycyl lysine isopeptide (Lys-Gly) (interchain with G-Cter in SUMO2); alternate cross-link involves residue K1982. K1987 participates in a covalent cross-link: Glycyl lysine isopeptide (Lys-Gly) (interchain with G-Cter in SUMO2). Residues 1990–1999 (SSSNPSSPAP) are compositionally biased toward low complexity. Residues S1992 and S1996 each carry the phosphoserine modification. Residues 2010–2280 (DAEVLEHSGK…RKAAWAEYEA (271 aa)) form an interaction with MECP2 region. Residues 2025–2205 (EILRMAEEIG…ERHFTMNELT (181 aa)) enclose the Helicase C-terminal domain. The residue at position 2220 (S2220) is a Phosphoserine. Residues 2462-2492 (PVAGGMQPPPLQRAPPPMRSKNPGPSQGKSM) form a disordered region. The span at 2468–2479 (QPPPLQRAPPPM) shows a compositional bias: pro residues. Residues R2474 and R2480 each carry the omega-N-methylarginine modification.

The protein belongs to the SNF2/RAD54 helicase family. Interacts with DAXX to form the chromatin remodeling complex ATRX:DAXX. Probably binds EZH2. Binds annexin V in a calcium and phosphatidylcholine/phosphatidylserine-dependent manner. Interacts directly with CBX5 via the PxVxL motif. Interacts with RAD50, MRE11 and NBN; indicative for an association with the MRN complex. Interacts with histone MACROH2A1. Interacts with histone H3 peptides methylated at 'Lys-10' with preferences H3K9me3 &gt; H3K9me2 &gt; H3K9me1. Interacts with histone H3 peptides unmethylated at 'Lys-5' (H3K4me0). Interacts with MECP2, SMC1 and SMC3. Interacts with SETDB1, TRIM28 and ZNF274.

Its subcellular location is the nucleus. The protein localises to the chromosome. The protein resides in the telomere. It is found in the PML body. It carries out the reaction ATP + H2O = ADP + phosphate + H(+). Its function is as follows. Involved in transcriptional regulation and chromatin remodeling. Facilitates DNA replication in multiple cellular environments and is required for efficient replication of a subset of genomic loci. Binds to DNA tandem repeat sequences in both telomeres and euchromatin and in vitro binds DNA quadruplex structures. May help stabilizing G-rich regions into regular chromatin structures by remodeling G4 DNA and incorporating H3.3-containing nucleosomes. Catalytic component of the chromatin remodeling complex ATRX:DAXX which has ATP-dependent DNA translocase activity and catalyzes the replication-independent deposition of histone H3.3 in pericentric DNA repeats outside S-phase and telomeres, and the in vitro remodeling of H3.3-containing nucleosomes. Its heterochromatin targeting is proposed to involve a combinatorial readout of histone H3 modifications (specifically methylation states of H3K9 and H3K4) and association with CBX5. Involved in maintaining telomere structural integrity in embryonic stem cells which probably implies recruitment of CBX5 to telomeres. May be involved in transcriptional regulation of telomeric repeat-containing RNA (TERRA). Acts as a negative regulator of chromatin incorporation of transcriptionally repressive histone MACROH2A1, particularily at telomeres. Participates in the allele-specific gene expression at the imprinted IGF2/H19 gene locus. On the maternal allele, required for the chromatin occupancy of SMC1 and CTCTF within the H19 imprinting control region (ICR) and involved in esatblishment of histone tails modifications in the ICR. May be involved in brain development and facial morphogenesis. Binds to zinc-finger coding genes with atypical chromatin signatures and regulates its H3K9me3 levels. Forms a complex with ZNF274, TRIM28 and SETDB1 to facilitate the deposition and maintenance of H3K9me3 at the 3' exons of zinc-finger genes. In Pan troglodytes (Chimpanzee), this protein is Transcriptional regulator ATRX (ATRX).